A 248-amino-acid polypeptide reads, in one-letter code: PF03932 family protein CutC (248 aa).

Belongs to the CutC family. As to quaternary structure, homodimer.

The protein localises to the cytoplasm. This chain is PF03932 family protein CutC, found in Escherichia coli (strain 55989 / EAEC).